Consider the following 245-residue polypeptide: tRNA (guanine-N(1)-)-methyltransferase (245 aa).

Residues G111 and 131 to 136 (MGDYVL) each bind S-adenosyl-L-methionine.

It belongs to the RNA methyltransferase TrmD family. As to quaternary structure, homodimer.

It is found in the cytoplasm. The catalysed reaction is guanosine(37) in tRNA + S-adenosyl-L-methionine = N(1)-methylguanosine(37) in tRNA + S-adenosyl-L-homocysteine + H(+). Functionally, specifically methylates guanosine-37 in various tRNAs. The polypeptide is tRNA (guanine-N(1)-)-methyltransferase (Staphylococcus epidermidis (strain ATCC 12228 / FDA PCI 1200)).